Here is a 148-residue protein sequence, read N- to C-terminus: MGANVSTPDQRFQVTHFRSTKPWTPRPEIYPFKVNSPCIVEIKNMNQWKSRLNALKDTNKLLVIEFTAKWCGPCKTLEPKLEELAAKYTDVEFVKIDVDVLMSVWMEFNLSTLPAIVFMKRGREVDMVVGVKVDELERKLNKYTQSFF.

The Thioredoxin domain maps to 1–145; it reads MGANVSTPDQ…LERKLNKYTQ (145 aa). Catalysis depends on nucleophile residues C71 and C74. A disulfide bond links C71 and C74.

The protein belongs to the thioredoxin family. Plant H-type subfamily.

Its subcellular location is the cytoplasm. In terms of biological role, probable thiol-disulfide oxidoreductase that may be involved in the redox regulation of a number of cytosolic enzymes. This is Thioredoxin H8 (TRX8) from Arabidopsis thaliana (Mouse-ear cress).